We begin with the raw amino-acid sequence, 78 residues long: Acyl carrier protein (78 aa).

The region spanning 2–77 (SDIAERVKKI…DAIKFLEKNS (76 aa)) is the Carrier domain. Ser37 carries the O-(pantetheine 4'-phosphoryl)serine modification.

The protein belongs to the acyl carrier protein (ACP) family. Post-translationally, 4'-phosphopantetheine is transferred from CoA to a specific serine of apo-ACP by AcpS. This modification is essential for activity because fatty acids are bound in thioester linkage to the sulfhydryl of the prosthetic group.

The protein resides in the cytoplasm. Its pathway is lipid metabolism; fatty acid biosynthesis. Functionally, carrier of the growing fatty acid chain in fatty acid biosynthesis. This Methylorubrum extorquens (strain CM4 / NCIMB 13688) (Methylobacterium extorquens) protein is Acyl carrier protein.